We begin with the raw amino-acid sequence, 271 residues long: Membrane protein insertase YidC 1 (271 aa).

The signal sequence occupies residues 1-20 (MKKKLKTFSLILLTGSLLVA). Cysteine 21 carries the N-palmitoyl cysteine lipid modification. A lipid anchor (S-diacylglycerol cysteine) is attached at cysteine 21. A run of 4 helical transmembrane segments spans residues 45 to 65 (IQWL…TLII), 124 to 144 (YASV…FQAL), 163 to 183 (PDPY…STWL), and 201 to 221 (VMPF…VLYW).

It belongs to the OXA1/ALB3/YidC family. Type 2 subfamily.

It is found in the cell membrane. Required for the insertion and/or proper folding and/or complex formation of integral membrane proteins into the membrane. Involved in integration of membrane proteins that insert both dependently and independently of the Sec translocase complex, as well as at least some lipoproteins. The sequence is that of Membrane protein insertase YidC 1 from Streptococcus agalactiae serotype V (strain ATCC BAA-611 / 2603 V/R).